The sequence spans 385 residues: 1-deoxy-D-xylulose 5-phosphate reductoisomerase (385 aa).

The NADPH site is built by threonine 10, glycine 11, serine 12, isoleucine 13, lysine 37, and asparagine 124. Lysine 125 is a 1-deoxy-D-xylulose 5-phosphate binding site. Glutamate 126 contributes to the NADPH binding site. Aspartate 150 contacts Mn(2+). Positions 151, 152, 176, and 199 each coordinate 1-deoxy-D-xylulose 5-phosphate. Glutamate 152 contacts Mn(2+). Residue glycine 205 coordinates NADPH. Residues serine 212, asparagine 217, lysine 218, and glutamate 221 each coordinate 1-deoxy-D-xylulose 5-phosphate. Position 221 (glutamate 221) interacts with Mn(2+).

The protein belongs to the DXR family. It depends on Mg(2+) as a cofactor. Mn(2+) is required as a cofactor.

It catalyses the reaction 2-C-methyl-D-erythritol 4-phosphate + NADP(+) = 1-deoxy-D-xylulose 5-phosphate + NADPH + H(+). It participates in isoprenoid biosynthesis; isopentenyl diphosphate biosynthesis via DXP pathway; isopentenyl diphosphate from 1-deoxy-D-xylulose 5-phosphate: step 1/6. Its function is as follows. Catalyzes the NADPH-dependent rearrangement and reduction of 1-deoxy-D-xylulose-5-phosphate (DXP) to 2-C-methyl-D-erythritol 4-phosphate (MEP). The polypeptide is 1-deoxy-D-xylulose 5-phosphate reductoisomerase (Clostridium botulinum (strain Kyoto / Type A2)).